The chain runs to 467 residues: MADGSSETKSSNQMWGGRFASGPDAIMEEINASIGFDKKLYAQDIRGSIAHATMLAHQGIISAEDKDKIVHGLDTILSEIDSGAFEFSRRLEDIHMNIEARLAALIGPAAGRLHTARSRNDQVALDFRLWVKEELQKTEKALTGLIAAFLDRAEEHAETVMPGFTHLQTAQPVTFGHHCMAYVEMFGRDRARVRHAIEHMDESPIGAAALAGTGFPIDRHMTAKALGFREPTRNSIDTVSDRDFALEFLSIAAIAATHLSRLAEEIVIWSTPQFGFIRLSDAFSTGSSIMPQKKNPDAAELVRAKTGRVNGSLVALLTVMKGLPLAYSKDMQEDKEQVFDAAESLELAIAAMTGMIRDVTIRADRMKAAAGSGYSTATDLADWLVREAGLPFRDAHHVTGRVVALAEQKGCDLADLPLAELQAINSAITDKVYGVLTVEASVASRTSFGGTAPSEVRKQIAWWRARN.

The protein belongs to the lyase 1 family. Argininosuccinate lyase subfamily.

It is found in the cytoplasm. It catalyses the reaction 2-(N(omega)-L-arginino)succinate = fumarate + L-arginine. The protein operates within amino-acid biosynthesis; L-arginine biosynthesis; L-arginine from L-ornithine and carbamoyl phosphate: step 3/3. This Rhizobium meliloti (strain 1021) (Ensifer meliloti) protein is Argininosuccinate lyase 1.